The sequence spans 623 residues: Chaperone protein dnaK (623 aa).

A disordered region spans residues 598-623; that stretch reads TPDAGAEGGAAPSQDDAIETDFSTEK.

This sequence belongs to the heat shock protein 70 family.

It is found in the plastid. The protein resides in the chloroplast. Its function is as follows. Acts as a chaperone. This chain is Chaperone protein dnaK, found in Emiliania huxleyi (Coccolithophore).